The chain runs to 168 residues: Endoribonuclease YbeY (168 aa).

Zn(2+) contacts are provided by histidine 126, histidine 130, and histidine 136.

This sequence belongs to the endoribonuclease YbeY family. Zn(2+) serves as cofactor.

The protein resides in the cytoplasm. Single strand-specific metallo-endoribonuclease involved in late-stage 70S ribosome quality control and in maturation of the 3' terminus of the 16S rRNA. The sequence is that of Endoribonuclease YbeY from Agrobacterium fabrum (strain C58 / ATCC 33970) (Agrobacterium tumefaciens (strain C58)).